The primary structure comprises 391 residues: Phosphoglycerate kinase (391 aa).

Residues 16–18 (DLN), R31, 54–57 (HLGR), R108, and R141 contribute to the substrate site. ATP is bound by residues K192, E314, and 340–343 (GGDT).

It belongs to the phosphoglycerate kinase family. In terms of assembly, monomer.

The protein resides in the cytoplasm. The enzyme catalyses (2R)-3-phosphoglycerate + ATP = (2R)-3-phospho-glyceroyl phosphate + ADP. It functions in the pathway carbohydrate degradation; glycolysis; pyruvate from D-glyceraldehyde 3-phosphate: step 2/5. This Coxiella burnetii (strain RSA 493 / Nine Mile phase I) protein is Phosphoglycerate kinase.